A 698-amino-acid polypeptide reads, in one-letter code: eEF1A lysine and N-terminal methyltransferase (698 aa).

Met-1 carries the post-translational modification N-acetylmethionine. Phosphoserine is present on Ser-267. The tract at residues 431–461 is disordered; sequence KDTSHRAQKKRKKDRKKQRPADTSEDFPPAP. Over residues 436-448 the composition is skewed to basic residues; it reads RAQKKRKKDRKKQ.

Belongs to the methyltransferase superfamily. In terms of assembly, forms a tripartite complex containing GAB1, METTL13 and SPRY2. Within the complex interacts with GAB1 and SPRY2. Expressed in the inner ear (at protein level). Expression is detected in the cochlear duct, spiral limbus region, efferent and afferent nerves, and in spiral ganglion neurons (at protein level).

It localises to the cytoplasm. It is found in the nucleus. The protein resides in the mitochondrion. The catalysed reaction is L-lysyl-[protein] + S-adenosyl-L-methionine = N(6)-methyl-L-lysyl-[protein] + S-adenosyl-L-homocysteine + H(+). The enzyme catalyses N(6)-methyl-L-lysyl-[protein] + S-adenosyl-L-methionine = N(6),N(6)-dimethyl-L-lysyl-[protein] + S-adenosyl-L-homocysteine + H(+). It catalyses the reaction N-terminal glycyl-L-lysyl-L-glutamyl-[protein] + 3 S-adenosyl-L-methionine = N-terminal N,N,N-trimethyl-glycyl-L-lysyl-L-glutamyl-[protein] + 3 S-adenosyl-L-homocysteine + 3 H(+). Its function is as follows. Dual methyltransferase that catalyzes methylation of elongation factor 1-alpha (EEF1A1 and EEF1A2) at two different positions, and is therefore involved in the regulation of mRNA translation. Via its C-terminus, methylates EEF1A1 and EEF1A2 at the N-terminal residue 'Gly-2'. Via its N-terminus dimethylates EEF1A1 and EEF1A2 at residue 'Lys-55'. Has no activity towards core histones H2A, H2B, H3 and H4. This is eEF1A lysine and N-terminal methyltransferase from Mus musculus (Mouse).